Here is a 374-residue protein sequence, read N- to C-terminus: MARSTPCSQTSLAVPTHFSLVSHVTVPSEGVMPSPLSLCRYLPRELSPSVDSRSCSIPLVAPRKAGKLFLGTTPPRAPGLPRRLAWFSIDWEQVCLMHRLGSGGFGSVYKATYHGVPVAIKQVNKCTKDLRASQRSFWAELNIARLRHDNIVRVVAASTRTPEDSNSLGTIIMEFGGNVTLHQVIYGATRSPEPLSCREQLSLGKCLKYSLDVVNGLLFLHSQSILHLDLKPANILISEQDVCKISDFGCSQKLQDLRCRQASPHHIGGTYTHQAPEILKGEIATPKADIYSFGITLWQMTTREVPYSGEPQYVQYAVVAYNLRPSLAGAVFTASLTGKTLQNIIQSCWEARALQRPGAELLQRDLKAFRGALG.

Residues 94-370 (VCLMHRLGSG…LLQRDLKAFR (277 aa)) form the Protein kinase domain. ATP is bound by residues 100–108 (LGSGGFGSV) and Lys-121. The active-site Proton acceptor is the Asp-229.

Belongs to the protein kinase superfamily. Ser/Thr protein kinase family.

The enzyme catalyses L-seryl-[protein] + ATP = O-phospho-L-seryl-[protein] + ADP + H(+). It carries out the reaction L-threonyl-[protein] + ATP = O-phospho-L-threonyl-[protein] + ADP + H(+). The protein is Serine/threonine-protein kinase-transforming protein mos (V-MOS) of Mus musculus (Mouse).